A 148-amino-acid chain; its full sequence is Protein GLUTAMINE DUMPER 3 (148 aa).

Residues 1 to 24 form a disordered region; that stretch reads MEGRQYYPPRENVEGNRTTMGGGP. At 1–34 the chain is on the extracellular side; that stretch reads MEGRQYYPPRENVEGNRTTMGGGPHSPWHSPVPY. Residues 35-55 traverse the membrane as a helical segment; the sequence is LFGGLAAMLGLIAFALLILAC. The Cytoplasmic segment spans residues 56–148; it reads SYWRLSGYLD…RSSESNGETH (93 aa). Positions 99–103 match the VIMAG motif; the sequence is VIMAG. A compositionally biased stretch (acidic residues) spans 120-132; sequence CDDDDDEDDDVEG. The tract at residues 120–148 is disordered; sequence CDDDDDEDDDVEGSDQVVPRSSESNGETH. Residues 138 to 148 show a composition bias toward polar residues; sequence PRSSESNGETH.

This sequence belongs to the GLUTAMINE DUMPER 1 (TC 9.B.60) family. Expressed in the vascular tissues. Also detected in anthers.

It localises to the membrane. Its function is as follows. Probable subunit of an amino acid transporter involved in the regulation of the amino acid metabolism. Stimulates amino acid export by activating nonselective amino acid facilitators. Acts upstream genes involved in the salicylic acid (SA) pathway and in the geminivirus-host interaction. The polypeptide is Protein GLUTAMINE DUMPER 3 (GDU3) (Arabidopsis thaliana (Mouse-ear cress)).